Reading from the N-terminus, the 100-residue chain is Large ribosomal subunit protein uL23 (100 aa).

This sequence belongs to the universal ribosomal protein uL23 family. As to quaternary structure, part of the 50S ribosomal subunit. Contacts protein L29, and trigger factor when it is bound to the ribosome.

Its function is as follows. One of the early assembly proteins it binds 23S rRNA. One of the proteins that surrounds the polypeptide exit tunnel on the outside of the ribosome. Forms the main docking site for trigger factor binding to the ribosome. The chain is Large ribosomal subunit protein uL23 from Thermosynechococcus vestitus (strain NIES-2133 / IAM M-273 / BP-1).